Consider the following 457-residue polypeptide: Multidrug resistance protein MdtK (457 aa).

The Cytoplasmic portion of the chain corresponds to 1–10 (MQKYISEARL). Residues 11–31 (LLALAIPVILAQIAQTAMGFV) traverse the membrane as a helical segment. Residues 32-52 (DTVMAGGYSATDMAAVAIGTS) lie on the Extracellular side of the membrane. A helical transmembrane segment spans residues 53 to 73 (IWLPAILFGHGLLLALTPVIA). The Cytoplasmic segment spans residues 74–92 (QLNGSGRRERIAHQVRQGF). Residues 93–113 (WLAGFVSVLIMLVLWNAGYII) traverse the membrane as a helical segment. Over 114–126 (RSMENIDPALADK) the chain is Extracellular. The helical transmembrane segment at 127 to 147 (AVGYLRALLWGAPGYLFFQVA) threads the bilayer. Over 148-159 (RNQCEGLAKTKP) the chain is Cytoplasmic. Residues 160–180 (GMVMGFIGLLVNIPVNYIFIY) traverse the membrane as a helical segment. Topologically, residues 181–188 (GHFGMPEL) are extracellular. A helical membrane pass occupies residues 189-209 (GGVGCGVATAAVYWVMFLAMV). Topologically, residues 210-242 (SYIKRARSMRDIRNEKGTAKPDPAVMKRLIQLG) are cytoplasmic. Residues 243–263 (LPIALALFFEVTLFAVVALLV) traverse the membrane as a helical segment. The Extracellular portion of the chain corresponds to 264 to 275 (SPLGIVDVAGHQ). The helical transmembrane segment at 276-296 (IALNFSSLMFVLPMSLAAAVT) threads the bilayer. Residues 297-313 (IRVGYRLGQGSTLDAQT) lie on the Cytoplasmic side of the membrane. Residues 314–334 (AARTGLMVGVCMATLTAIFTV) form a helical membrane-spanning segment. Topologically, residues 335-349 (SLREQIALLYNDNPE) are extracellular. The helical transmembrane segment at 350-370 (VVTLAAHLMLLAAVYQISDSI) threads the bilayer. The Cytoplasmic segment spans residues 371–386 (QVIGSGILRGYKDTRS). A helical membrane pass occupies residues 387 to 407 (IFYITFTAYWVLGLPSGYILA). Topologically, residues 408-417 (LTDLVVEPMG) are extracellular. The chain crosses the membrane as a helical span at residues 418 to 438 (PAGFWIGFIIGLTSAAIMMML). Over 439-457 (RMRYLQRLPSAIILQRASR) the chain is Cytoplasmic.

The protein belongs to the multi antimicrobial extrusion (MATE) (TC 2.A.66.1) family. MdtK subfamily.

The protein localises to the cell inner membrane. Multidrug efflux pump that functions probably as a Na(+)/drug antiporter. The polypeptide is Multidrug resistance protein MdtK (mdtK) (Escherichia coli O157:H7).